Here is a 1402-residue protein sequence, read N- to C-terminus: Defective in tip formation protein A (1402 aa).

Disordered regions lie at residues 1–20, 37–94, 109–133, and 210–292; these read MKDI…PPQI, NVTT…PQIV, NTPS…DNDI, and KQSS…RRLK. 2 tandem repeats follow at residues 12–18 and 40–46. The segment at 12-92 is 4 X 7 AA repeat of T-T-T-[IV]-[AQ]-P-P; sequence TTTVAPPQIN…TTTTTVQPPQ (81 aa). The segment covering 38-47 has biased composition (low complexity); it reads VTTTTVQPPQ. Residues 48–58 are compositionally biased toward pro residues; the sequence is IVSPPSPPSPP. A compositionally biased stretch (low complexity) spans 59 to 94; sequence QTTTIAPPTILPTTKTTTTTTTTTTTTTTVQPPQIV. 2 repeat units span residues 60 to 66 and 86 to 92. Residues 210–234 show a composition bias toward low complexity; the sequence is KQSSQSQLQQQLSSQSLQQIQQKSK. Residues 235 to 253 are compositionally biased toward pro residues; it reads QPPPQQQQQQQPPPPPIPL. Positions 254-279 are enriched in low complexity; that stretch reads LPQIHQQLKPKQQQEQQQQQEQQQQQ. A coiled-coil region spans residues 350 to 383; the sequence is QRIKSFIENHKKKKQKYREYQSEKNQQQKSNSKK. 2 disordered regions span residues 429–453 and 712–745; these read DQQQ…SPMT and NNNN…NLSN. Over residues 430–453 the composition is skewed to low complexity; that stretch reads QQQQQQQQQQSTMTTTSSSSSPMT.

It localises to the cell surface. Functionally, required for correct organization of the actin cytoskeleton and cytokinesis. Also required for apical sorting of prestalk cells, a prerequisite for formation of the tip at the mound stage and subsequent formation of the fruiting body. May be required for cell adhesion. This chain is Defective in tip formation protein A (dtfA), found in Dictyostelium discoideum (Social amoeba).